A 497-amino-acid chain; its full sequence is Argininosuccinate lyase (497 aa).

The protein belongs to the lyase 1 family. Argininosuccinate lyase subfamily.

Its subcellular location is the cytoplasm. The enzyme catalyses 2-(N(omega)-L-arginino)succinate = fumarate + L-arginine. Its pathway is amino-acid biosynthesis; L-arginine biosynthesis; L-arginine from L-ornithine and carbamoyl phosphate: step 3/3. In Clavibacter michiganensis subsp. michiganensis (strain NCPPB 382), this protein is Argininosuccinate lyase.